Reading from the N-terminus, the 346-residue chain is D-amino-acid oxidase (346 aa).

Residues G22, I24, T52, T53, S54, A58, A59, L60, and T187 each coordinate FAD. Y227 and R284 together coordinate D-proline. D-serine contacts are provided by Y227 and R284. The FAD site is built by R284, G311, G312, G314, and T316. R284 contacts D-dopa. G312 contributes to the D-proline binding site. A D-serine-binding site is contributed by G312. G312 lines the D-dopa pocket. Residues 344–346 (SKL) carry the Microbody targeting signal motif.

Belongs to the DAMOX/DASOX family. FAD is required as a cofactor.

Its subcellular location is the peroxisome matrix. It catalyses the reaction a D-alpha-amino acid + O2 + H2O = a 2-oxocarboxylate + H2O2 + NH4(+). The catalysed reaction is D-serine + O2 + H2O = 3-hydroxypyruvate + H2O2 + NH4(+). The enzyme catalyses D-phenylalanine + O2 + H2O = 3-phenylpyruvate + H2O2 + NH4(+). It carries out the reaction D-alanine + O2 + H2O = pyruvate + H2O2 + NH4(+). It catalyses the reaction D-arginine + O2 + H2O = 5-guanidino-2-oxopentanoate + H2O2 + NH4(+). The catalysed reaction is D-methionine + O2 + H2O = 4-methylsulfanyl-2-oxobutanoate + H2O2 + NH4(+). The enzyme catalyses D-ornithine + O2 + H2O = 5-amino-2-oxopentanoate + H2O2 + NH4(+). It carries out the reaction D-leucine + O2 + H2O = 4-methyl-2-oxopentanoate + H2O2 + NH4(+). It catalyses the reaction D-lysine + O2 + H2O = 6-amino-2-oxohexanoate + H2O2 + NH4(+). The catalysed reaction is D-proline + O2 = 1-pyrroline-2-carboxylate + H2O2. The enzyme catalyses D-valine + O2 + H2O = 3-methyl-2-oxobutanoate + H2O2 + NH4(+). It carries out the reaction D-histidine + O2 + H2O = 3-(imidazol-5-yl)pyruvate + H2O2 + NH4(+). Its function is as follows. Catalyzes the oxidative deamination of D-amino acids with broad substrate specificity. Has low in vitro and no in vivo activity on D-serine; primary D-serine degradation is performed by the D-serine dehydratase dsd. The protein is D-amino-acid oxidase (ddo-1) of Dictyostelium discoideum (Social amoeba).